We begin with the raw amino-acid sequence, 2207 residues long: Mediator of RNA polymerase II transcription subunit 13-like (2207 aa).

Residues 337–355 (VQSAASHLGSQDGGMSTMH) are compositionally biased toward polar residues. Disordered regions lie at residues 337-368 (VQSA…PKLH), 384-403 (AQSK…AAHS), 431-479 (VGPS…KRPL), and 519-574 (KYDK…VPVN). A compositionally biased stretch (basic residues) spans 356–368 (SPKRSRKTPPKLH). Polar residues predominate over residues 384–394 (AQSKRSQMSTP). Low complexity predominate over residues 442–453 (PGFSAGLPSSSS). Positions 463–475 (KTTERQEKGDKLQ) are enriched in basic and acidic residues. Over residues 528–539 (SRNTSKQMNLNP) the composition is skewed to polar residues. Positions 546-555 (PISPLPPTLS) are enriched in pro residues. A phosphoserine mark is found at Ser-548 and Ser-555. Residues 664–668 (LQRLL) carry the LXXLL motif 1 motif. The span at 731-747 (GTEKDSLKKNKSEDGFG) shows a compositional bias: basic and acidic residues. Positions 731-767 (GTEKDSLKKNKSEDGFGTKDVTTPGHSTPVPDGKNAM) are disordered. Phosphoserine occurs at positions 812 and 821. The tract at residues 816-847 (ELGAVSPALRSSKMPTVGTEERPPGKDGRAAG) is disordered. A compositionally biased stretch (basic and acidic residues) spans 834–844 (TEERPPGKDGR). Ser-918 is subject to Phosphoserine. The disordered stretch occupies residues 1004-1091 (DPDYVNTPQM…STTRPLNSVE (88 aa)). Residues 1009-1019 (NTPQMNTPVTL) show a composition bias toward polar residues. A compositionally biased stretch (low complexity) spans 1020–1031 (NSAAPASNSGAG). Residues 1072–1087 (TDQGSPASTPSTTRPL) show a composition bias toward polar residues. The LXXLL motif 2 motif lies at 1224-1228 (LLLLL). The segment at 1379–1400 (LPIPTLLVGYDKEFLTISPFSL) is leucine-zipper. Disordered stretches follow at residues 1523–1652 (LMPP…SVTE) and 2042–2077 (GNLH…QGER). Residues 1541–1593 (PGNAGSLPSNSGSGAPPAGSAFNPTSSSSANPTTSSSSASSGPPGSSAASAPG) are compositionally biased toward low complexity. Composition is skewed to polar residues over residues 1612–1624 (QNPS…TDRT) and 1635–1649 (PGQS…GQDS). Residue Ser-2080 is modified to Phosphoserine.

The protein belongs to the Mediator complex subunit 13 family. Component of the Mediator complex, which is composed of MED1, MED4, MED6, MED7, MED8, MED9, MED10, MED11, MED12, MED13, MED13L, MED14, MED15, MED16, MED17, MED18, MED19, MED20, MED21, MED22, MED23, MED24, MED25, MED26, MED27, MED29, MED30, MED31, CCNC, CDK8 and CDC2L6/CDK11. The MED12, MED13, CCNC and CDK8 subunits form a distinct module termed the CDK8 module. Mediator containing the CDK8 module is less active than Mediator lacking this module in supporting transcriptional activation. Individual preparations of the Mediator complex lacking one or more distinct subunits have been variously termed ARC, CRSP, DRIP, PC2, SMCC and TRAP. In terms of tissue distribution, highly expressed in heart and weakly expressed in brain, spleen, lung, liver, kidney and testis.

The protein localises to the nucleus. Functionally, component of the Mediator complex, a coactivator involved in the regulated transcription of nearly all RNA polymerase II-dependent genes. Mediator functions as a bridge to convey information from gene-specific regulatory proteins to the basal RNA polymerase II transcription machinery. Mediator is recruited to promoters by direct interactions with regulatory proteins and serves as a scaffold for the assembly of a functional preinitiation complex with RNA polymerase II and the general transcription factors. This subunit may specifically regulate transcription of targets of the Wnt signaling pathway and SHH signaling pathway. The polypeptide is Mediator of RNA polymerase II transcription subunit 13-like (Med13l) (Mus musculus (Mouse)).